Reading from the N-terminus, the 283-residue chain is Elongation factor Ts (283 aa).

The segment at 80–83 is involved in Mg(2+) ion dislocation from EF-Tu; that stretch reads TDFV.

It belongs to the EF-Ts family.

Its subcellular location is the cytoplasm. In terms of biological role, associates with the EF-Tu.GDP complex and induces the exchange of GDP to GTP. It remains bound to the aminoacyl-tRNA.EF-Tu.GTP complex up to the GTP hydrolysis stage on the ribosome. This Haemophilus influenzae (strain PittGG) protein is Elongation factor Ts.